The chain runs to 124 residues: Small ribosomal subunit protein bS6 (124 aa).

Belongs to the bacterial ribosomal protein bS6 family.

In terms of biological role, binds together with bS18 to 16S ribosomal RNA. The chain is Small ribosomal subunit protein bS6 from Actinobacillus pleuropneumoniae serotype 7 (strain AP76).